We begin with the raw amino-acid sequence, 1439 residues long: ABC transporter G family member 14 (1439 aa).

Basic and acidic residues predominate over residues 1-17 (MEENSNKFEQELKEIGQ). The disordered stretch occupies residues 1–21 (MEENSNKFEQELKEIGQDRNQ). An ABC transporter 1 domain is found at 117 to 370 (FSILNFFKPS…FMSLGFDCEP (254 aa)). The ABC transmembrane type-2 1 domain maps to 475–700 (LNDKFGLFTK…GSEFDAYRIC (226 aa)). 6 consecutive transmembrane segments (helical) span residues 479–499 (FGLF…SSVF), 516–536 (ILSA…MTFI), 564–584 (IPFT…MFGL), 589–609 (GKFF…TALF), 614–634 (YLCP…IFML), and 734–754 (IIVY…MEYI). The 245-residue stretch at 805–1049 (FTWQNIRYTV…LTSYFERHGV (245 aa)) folds into the ABC transporter 2 domain. Residue 841–848 (GSSGAGKT) participates in ATP binding. Positions 1141-1366 (YYTYGSFVQS…YNTCQNYTSA (226 aa)) constitute an ABC transmembrane type-2 2 domain. 6 helical membrane-spanning segments follow: residues 1144–1164 (YGSF…FWNL), 1175–1195 (IFFI…VMPQ), 1217–1237 (FAIS…TIFF), 1256–1276 (FYFW…GQAV), 1283–1303 (MFFA…FSGV), and 1413–1433 (VGII…FVYL).

Belongs to the ABC transporter superfamily. ABCG family. PDR (TC 3.A.1.205) subfamily.

The protein localises to the membrane. The chain is ABC transporter G family member 14 (abcG14) from Dictyostelium discoideum (Social amoeba).